Consider the following 491-residue polypeptide: Nuatigenin 3-beta-glucosyltransferase (491 aa).

His20 acts as the Proton acceptor in catalysis. Position 20 (His20) interacts with an anthocyanidin. Asp125 (charge relay) is an active-site residue. UDP-alpha-D-glucose is bound by residues Ala352, Gln354, His369, Trp372, Asn373, Ser374, and Glu377. Ala392 lines the an anthocyanidin pocket. 2 residues coordinate UDP-alpha-D-glucose: Glu393 and Gln394.

This sequence belongs to the UDP-glycosyltransferase family. Expressed in roots, stems and leaves.

It carries out the reaction nuatigenin + UDP-alpha-D-glucose = nuatigenin 3-beta-D-glucopyranoside + UDP + H(+). The catalysed reaction is diosgenin + UDP-alpha-D-glucose = diosgenin 3-O-beta-D-glucoside + UDP + H(+). The enzyme catalyses tigogenin + UDP-alpha-D-glucose = tigogenin 3-O-beta-D-glucopyranoside + UDP + H(+). It catalyses the reaction solasodine + UDP-alpha-D-glucose = solasodine 3-beta-D-glucoside + UDP + H(+). It carries out the reaction solanidine + UDP-alpha-D-glucose = solanidine 3-O-beta-D-glucopyranoside + UDP + H(+). The catalysed reaction is tomatidine + UDP-alpha-D-glucose = tomatidine 3-O-beta-D-glucopyranoside + UDP + H(+). Its function is as follows. Glucosyltransferase involved in steroid saponin biosynthesis. Catalyzes the 3-O-glucosylation of steroidal sapogenins, such as diosgenin, nuatigenin and tigogenin. Can glucosylate steroidal alkaloids, such as solanidine, solasodine and tomatidine. The chain is Nuatigenin 3-beta-glucosyltransferase from Solanum aculeatissimum (Dutch eggplant).